The chain runs to 57 residues: Large ribosomal subunit protein bL32 (57 aa).

Over residues 1 to 19 (MAVPKRRMSRSNTRSRRSQ) the composition is skewed to basic residues. Residues 1–22 (MAVPKRRMSRSNTRSRRSQWKA) are disordered.

It belongs to the bacterial ribosomal protein bL32 family.

This is Large ribosomal subunit protein bL32 from Rhodococcus jostii (strain RHA1).